A 213-amino-acid polypeptide reads, in one-letter code: Thymidylate kinase (213 aa).

9-16 (GVEGCGKT) contacts ATP.

Belongs to the thymidylate kinase family.

The catalysed reaction is dTMP + ATP = dTDP + ADP. In terms of biological role, phosphorylation of dTMP to form dTDP in both de novo and salvage pathways of dTTP synthesis. This is Thymidylate kinase from Geotalea uraniireducens (strain Rf4) (Geobacter uraniireducens).